Consider the following 414-residue polypeptide: NAD-specific glutamate dehydrogenase (414 aa).

The substrate site is built by Lys-70 and Lys-94. Lys-106 acts as the Proton donor in catalysis. 2 residues coordinate NAD(+): Thr-190 and Asn-221. Ser-348 lines the substrate pocket.

It belongs to the Glu/Leu/Phe/Val dehydrogenases family. In terms of assembly, homohexamer.

The enzyme catalyses L-glutamate + NAD(+) + H2O = 2-oxoglutarate + NH4(+) + NADH + H(+). This is NAD-specific glutamate dehydrogenase (gluD) from Staphylococcus aureus (strain COL).